A 319-amino-acid chain; its full sequence is Acetyl-coenzyme A carboxylase carboxyl transferase subunit alpha (319 aa).

Residues K39–E293 enclose the CoA carboxyltransferase C-terminal domain.

It belongs to the AccA family. Acetyl-CoA carboxylase is a heterohexamer composed of biotin carboxyl carrier protein (AccB), biotin carboxylase (AccC) and two subunits each of ACCase subunit alpha (AccA) and ACCase subunit beta (AccD).

The protein localises to the cytoplasm. The catalysed reaction is N(6)-carboxybiotinyl-L-lysyl-[protein] + acetyl-CoA = N(6)-biotinyl-L-lysyl-[protein] + malonyl-CoA. It participates in lipid metabolism; malonyl-CoA biosynthesis; malonyl-CoA from acetyl-CoA: step 1/1. Its function is as follows. Component of the acetyl coenzyme A carboxylase (ACC) complex. First, biotin carboxylase catalyzes the carboxylation of biotin on its carrier protein (BCCP) and then the CO(2) group is transferred by the carboxyltransferase to acetyl-CoA to form malonyl-CoA. This Geobacter sulfurreducens (strain ATCC 51573 / DSM 12127 / PCA) protein is Acetyl-coenzyme A carboxylase carboxyl transferase subunit alpha.